A 207-amino-acid chain; its full sequence is Small ribosomal subunit protein uS4A (207 aa).

The 64-residue stretch at 98 to 161 (RRLDNVVYRM…REHKRIKELA (64 aa)) folds into the S4 RNA-binding domain.

This sequence belongs to the universal ribosomal protein uS4 family. In terms of assembly, part of the 30S ribosomal subunit. Contacts protein S5. The interaction surface between S4 and S5 is involved in control of translational fidelity.

In terms of biological role, one of the primary rRNA binding proteins, it binds directly to 16S rRNA where it nucleates assembly of the body of the 30S subunit. With S5 and S12 plays an important role in translational accuracy. The protein is Small ribosomal subunit protein uS4A of Symbiobacterium thermophilum (strain DSM 24528 / JCM 14929 / IAM 14863 / T).